The chain runs to 182 residues: UPF0690 protein C1orf52 (182 aa).

Disordered stretches follow at residues 1–67 (MAAE…RSVT) and 100–182 (WKSN…KKKK). Acidic residues predominate over residues 23 to 32 (SDEEDNIEPE). Basic and acidic residues predominate over residues 50–63 (NKAEKRLPGPDELF). Position 67 is a phosphothreonine (threonine 67). Tyrosine 132 bears the Phosphotyrosine mark. A compositionally biased stretch (acidic residues) spans 151-162 (EGEETLESDDEK). The residue at position 158 (serine 158) is a Phosphoserine. A compositionally biased stretch (basic and acidic residues) spans 172–182 (VEPGEPAKKKK).

Belongs to the UPF0690 family. As to expression, expressed in all tissues tested including heart, placenta, liver, skeletal muscle, kidney and pancreas. Weak expression in brain and lung.

The polypeptide is UPF0690 protein C1orf52 (C1orf52) (Homo sapiens (Human)).